The sequence spans 184 residues: Photosystem I assembly protein Ycf4 (184 aa).

The next 2 helical transmembrane spans lie at 19 to 39 (ISNF…LLVG) and 57 to 77 (IVFF…LFIS).

Belongs to the Ycf4 family.

The protein localises to the plastid. It is found in the chloroplast thylakoid membrane. Functionally, seems to be required for the assembly of the photosystem I complex. The polypeptide is Photosystem I assembly protein Ycf4 (Nicotiana tomentosiformis (Tobacco)).